The sequence spans 1720 residues: Merozoite surface protein 1 (1720 aa).

Positions 1 to 19 (MKIIFFLCSFLFFIINTQC) are cleaved as a signal peptide. Residues 63 to 112 (ASAQSGASAQSGASAQSGASAQSGASAQSGASAQSGTSGPSGPSGTSPSS) are compositionally biased toward low complexity. The tract at residues 63-137 (ASAQSGASAQ…PPADASDSDA (75 aa)) is disordered. Polar residues predominate over residues 113-122 (RSNTLPRSNT). Low complexity predominate over residues 123–132 (SSGASPPADA). Residues 474–519 (INNIKKKIDLEEKNINHTKEQNKKLLEDYEKSKKDYEELLEKFYEM) are a coiled coil. Disordered regions lie at residues 723-775 (SETT…PPKE), 908-955 (TGTS…SGPA), 1249-1278 (TPPQPDVTPSPLSVRVSGSSGSTKEETQIP), and 1470-1491 (KEKFPSSPPTTPPSPAKTDEQK). The span at 743-753 (EVTEETEETEE) shows a compositional bias: acidic residues. The span at 908–946 (TGTSSTSSPGNTTVNTAQSATHSNSQNQQSNASSTNTQN) shows a compositional bias: low complexity. Polar residues predominate over residues 1264-1278 (VSGSSGSTKEETQIP). Pro residues predominate over residues 1475–1484 (SSPPTTPPSP). EGF-like domains follow at residues 1611–1651 (HQCV…VENP) and 1652–1693 (NPTC…YPLF). Disulfide bonds link Cys-1613-Cys-1624, Cys-1618-Cys-1634, Cys-1636-Cys-1647, Cys-1655-Cys-1668, Cys-1662-Cys-1682, and Cys-1684-Cys-1698. The GPI-anchor amidated serine moiety is linked to residue Ser-1699. Positions 1700-1720 (SSNFLGISFLLILMLILYSFI) are cleaved as a propeptide — removed in mature form.

Forms a complex composed of subunits p83, p30, p38, and p42 which remain non-covalently associated; the complex is formed at the merozoite surface prior to egress from host erythrocytes. Forms a complex composed of processed MSP1 subunits, MSP6 subunit p36 and MSP7; the complex is formed at the merozoite surface prior to egress from host erythrocytes. Within the complex, interacts (via subunit p38) with MSP6 subunit p36 and (via subunits p83, p30 and p38) with MSP7 (via subunit p22). Forms a complex composed of MSP1, MSP6, DBLMSP1 and DBLMSP2. Within the complex, interacts (via subunit p38) with DBLMSP1 and DBLMSP2. Forms a complex composed of MSP1, and rhoptry proteins RhopH3, RAP1 and CLAG9/RhopH3. Within the complex, interacts (via subunits p42 and p19) with RhopH3 (via C-terminus). Forms a complex composed of MSP1, MSP6, MSP7, MSP9 and MSP3; within the complex, MSP6 and MSP9 mediate the binding to the host erythrocyte. Interacts (via subunits p19 and p42) with MSP9; the interaction is direct; MSP1 subunits p19 or p42, and MSP9 form a co-ligand complex that interacts with host SLC4A1/Band 3 protein. May interact with PFD6. Interacts with host spectrin. As to quaternary structure, interacts with host glycophorin GYPA in a sialic acid-independent manner. In terms of assembly, interacts with host proinflammatory cytokine S100P; the interaction blocks S100P inflammatory and chemotactic activities. Interacts with host SLC4A1/Band 3 (via 5ABC region) on the host erythrocyte surface in a sialic acid-independent manner. Post-translationally, the p190 precursor is cleaved by SUB1 prior to merozoite egress into 4 subunits p83, p30, p38, and p42 which remain non-covalently associated. SUB1-mediated proteolytic cleavage occurs in an orderly manner; the first cleavage occurs at the p30/p38 site, followed by cleavage at the p83/p30 site, in the 3D7 strain a second cleavage occurs at the N-terminus of p83, the last cleavage occurs at the p38/p42 site. The order of cleavage is essential for parasite viability. SUB1-mediated processing is essential for merozoite egress. In a second processing step during erythrocyte invasion, p42 is cleaved by SUB2 into p33 and p19; the latter remains attached to the merozoite surface via its GPI-anchor and is endocytosed during the subsequent ring stage.

It localises to the cell membrane. Its subcellular location is the secreted. The protein localises to the vacuole membrane. During the asexual blood stage, involved in merozoite egress from host erythrocytes possibly via its interaction with the host cytoskeleton protein spectrin resulting in the destabilization of the host cytoskeleton and thus leading to erythrocyte cell membrane rupture. Involved in the binding to host erythrocytes and is required for host erythrocyte invasion. In terms of biological role, by binding to host proinflammatory cytokine S100P may interfere with host immune responses. Functionally, involved in merozoite invasion of host erythrocytes. May play a role in the biogenesis and/or function of the food vacuole during the intraerythrocytic development. This Plasmodium falciparum (isolate 3D7) protein is Merozoite surface protein 1.